The following is a 417-amino-acid chain: UDP-N-acetylglucosamine 1-carboxyvinyltransferase (417 aa).

A phosphoenolpyruvate-binding site is contributed by 22–23; the sequence is KN. Arg92 is a binding site for UDP-N-acetyl-alpha-D-glucosamine. The Proton donor role is filled by Cys116. Cys116 is subject to 2-(S-cysteinyl)pyruvic acid O-phosphothioketal. UDP-N-acetyl-alpha-D-glucosamine contacts are provided by Asp304 and Ile326.

Belongs to the EPSP synthase family. MurA subfamily.

It localises to the cytoplasm. It carries out the reaction phosphoenolpyruvate + UDP-N-acetyl-alpha-D-glucosamine = UDP-N-acetyl-3-O-(1-carboxyvinyl)-alpha-D-glucosamine + phosphate. The protein operates within cell wall biogenesis; peptidoglycan biosynthesis. Cell wall formation. Adds enolpyruvyl to UDP-N-acetylglucosamine. This is UDP-N-acetylglucosamine 1-carboxyvinyltransferase from Geotalea uraniireducens (strain Rf4) (Geobacter uraniireducens).